The primary structure comprises 943 residues: UvrABC system protein A (943 aa).

Residue 32–39 coordinates ATP; that stretch reads GLSGSGKS. The segment at 251-278 adopts a C4-type zinc-finger fold; sequence CPVCGFTVPELEPRLFSFNAPFGSCPTC. 2 ABC transporter domains span residues 308–589 and 609–937; these read WNPI…KKSI and GSGR…QYLK. An ATP-binding site is contributed by 641-648; it reads GVSGSGKS. The C4-type zinc finger occupies 740-766; that stretch reads CEACSGDGIIKIEMHFLPDVYVPCEVC.

This sequence belongs to the ABC transporter superfamily. UvrA family. In terms of assembly, forms a heterotetramer with UvrB during the search for lesions.

Its subcellular location is the cytoplasm. In terms of biological role, the UvrABC repair system catalyzes the recognition and processing of DNA lesions. UvrA is an ATPase and a DNA-binding protein. A damage recognition complex composed of 2 UvrA and 2 UvrB subunits scans DNA for abnormalities. When the presence of a lesion has been verified by UvrB, the UvrA molecules dissociate. In Streptococcus mutans serotype c (strain ATCC 700610 / UA159), this protein is UvrABC system protein A.